Here is a 246-residue protein sequence, read N- to C-terminus: tRNA (guanine-N(1)-)-methyltransferase (246 aa).

S-adenosyl-L-methionine is bound by residues Gly112 and 131–136; that span reads IGDYVL.

Belongs to the RNA methyltransferase TrmD family. In terms of assembly, homodimer.

The protein resides in the cytoplasm. The enzyme catalyses guanosine(37) in tRNA + S-adenosyl-L-methionine = N(1)-methylguanosine(37) in tRNA + S-adenosyl-L-homocysteine + H(+). In terms of biological role, specifically methylates guanosine-37 in various tRNAs. This Thermosipho africanus (strain TCF52B) protein is tRNA (guanine-N(1)-)-methyltransferase.